Here is a 353-residue protein sequence, read N- to C-terminus: MDKYDVVKDLGAGNFGVARLLRHKDTKELVAMKYIERGRKIDENVAREIINHRSLKHPNIIRFKEVILTPTHLAIVMEYASGGELFDRICTAGRFSEAEARYFFQQLICGVDYCHSLQICHRDLKLENTLLDGSPAPLLKICDFGYSKSSILHSRPKSTVGTPAYIAPEVLSRREYDGKHADVWSCGVTLYVMLVGAYPFEDPNDPKNFRKTIQRIMAVQYKIPDYVHISQECKHLLSRIFVTNSAKRITLKEIKNHPWYLKNLPKELLESAQAAYYKRDTSFSLQSVEDIMKIVGEARNPAPSTSAVKSSGSGADEEEEEDVEAEVEEEEDDEDEYEKHVKEAQSCQESDKA.

The region spanning 4–260 (YDVVKDLGAG…LKEIKNHPWY (257 aa)) is the Protein kinase domain. Residues 10–18 (LGAGNFGVA) and lysine 33 contribute to the ATP site. Aspartate 123 serves as the catalytic Proton acceptor. A disordered region spans residues 299–353 (RNPAPSTSAVKSSGSGADEEEEEDVEAEVEEEEDDEDEYEKHVKEAQSCQESDKA). Residues 302–313 (APSTSAVKSSGS) are compositionally biased toward polar residues. The span at 315–336 (ADEEEEEDVEAEVEEEEDDEDE) shows a compositional bias: acidic residues. Residues 337-353 (YEKHVKEAQSCQESDKA) show a composition bias toward basic and acidic residues.

The protein belongs to the protein kinase superfamily. Ser/Thr protein kinase family. Expressed in seedlings.

The protein localises to the nucleus. The catalysed reaction is L-seryl-[protein] + ATP = O-phospho-L-seryl-[protein] + ADP + H(+). It carries out the reaction L-threonyl-[protein] + ATP = O-phospho-L-threonyl-[protein] + ADP + H(+). The protein is Serine/threonine-protein kinase SRK2G (SRK2G) of Arabidopsis thaliana (Mouse-ear cress).